The following is a 321-amino-acid chain: MQWLELSVTVDTEAVESVSELFAQYGYNGGVAVEEAIIPSLDSPEYQIDTNKPVIVRTYLLANEQAADAQTQIERGLWVLGMMRPVGDLQVKTIAEEDWANAWKEHYRTRRIGQRFVIVPSWLEYEPAENDVVLNLDPGMAFGTGLHPTTQLCLELMELIEFNNTTVLDLGCGSGILAVGAAKLGSQRVLALDTDPIAVEATAENARINHAETLVTALEGSLGDAPLEHWLGWEGAQLGTPQSYRHHNEFDVILANILAKVHVVLGNDYLAALKPGGVLITSGIINEREADVVAAFDAVGLEQVERRTQGDWVAFTHRKPV.

Positions 150, 171, 193, and 256 each coordinate S-adenosyl-L-methionine.

This sequence belongs to the methyltransferase superfamily. PrmA family.

It localises to the cytoplasm. It catalyses the reaction L-lysyl-[protein] + 3 S-adenosyl-L-methionine = N(6),N(6),N(6)-trimethyl-L-lysyl-[protein] + 3 S-adenosyl-L-homocysteine + 3 H(+). Its function is as follows. Methylates ribosomal protein L11. The chain is Ribosomal protein L11 methyltransferase from Herpetosiphon aurantiacus (strain ATCC 23779 / DSM 785 / 114-95).